The chain runs to 901 residues: Vacuolar import and degradation protein 22 (901 aa).

Over residues 1-10 (MRAMDTQVQS) the composition is skewed to polar residues. The disordered stretch occupies residues 1-54 (MRAMDTQVQSAERGLVLPPMNSTVSSATAATTATNTDTDTDGDRDEERESLAED). N-linked (GlcNAc...) asparagine glycosylation occurs at Asn21. Residues 27-37 (ATAATTATNTD) are compositionally biased toward low complexity. A BED-type zinc finger spans residues 66–122 (RDRSRYLGHFLGVDKMLEAVKCKYCGVIIRRQGNSISMAEASQTHLWSTHKIDPNAN). 4 residues coordinate Zn(2+): Cys87, Cys90, His110, and His115. Asn242 and Asn291 each carry an N-linked (GlcNAc...) asparagine glycan. A helical membrane pass occupies residues 381 to 401 (YYHNCIISIINSAILPLFGTP). 9 N-linked (GlcNAc...) asparagine glycosylation sites follow: Asn540, Asn645, Asn649, Asn652, Asn662, Asn669, Asn673, Asn688, and Asn722. The segment covering 646–677 (NSHNTSNHSNMNIHTDNQTNNINNRSGNNSDN) has biased composition (low complexity). The interval 646 to 727 (NSHNTSNHSN…NSNNNLSFGS (82 aa)) is disordered. Over residues 679–688 (DNEHDNDNDN) the composition is skewed to basic and acidic residues. Over residues 718–727 (NSNNNLSFGS) the composition is skewed to low complexity.

It belongs to the VID22 family. In terms of processing, glycosylated.

The protein resides in the cell membrane. Its subcellular location is the nucleus. Has a role in the negative regulation of gluconeogenesis. Imports fructose-1,6-bisphosphatase (FBPase) into the intermediate vacuole import and degradation (Vid) vesicles. This is an indirect role and requires cyclophilin A. The polypeptide is Vacuolar import and degradation protein 22 (VID22) (Saccharomyces cerevisiae (strain ATCC 204508 / S288c) (Baker's yeast)).